A 310-amino-acid chain; its full sequence is Putative type II methyltransferase M.MJ0563P (310 aa).

The region spanning 1 to 310 is the SAM-dependent MTase C5-type domain; the sequence is MNVIDLFSGC…AIAKEIKKQL (310 aa). Cys77 is an active-site residue.

Belongs to the class I-like SAM-binding methyltransferase superfamily. C5-methyltransferase family.

The enzyme catalyses a 2'-deoxycytidine in DNA + S-adenosyl-L-methionine = a 5-methyl-2'-deoxycytidine in DNA + S-adenosyl-L-homocysteine + H(+). A putative methylase that may protect DNA from cleavage by an unknown endonuclease. The chain is Putative type II methyltransferase M.MJ0563P from Methanocaldococcus jannaschii (strain ATCC 43067 / DSM 2661 / JAL-1 / JCM 10045 / NBRC 100440) (Methanococcus jannaschii).